We begin with the raw amino-acid sequence, 299 residues long: MTTTTTNVTDLYPTRGATEVATPRQDPVVWGSPDAPGPVSAGDLQALDRDGFLAIDQLITPDEVGEYQRELERLTTDPAIRADERSIVEPQSKEIRSVFEVHKISEVFAKLVRDERVVGRARQILGSDVYVHQSRINVKPGFGASGFYWHSDFETWHAEDGLPNMRTISVSIALTENYDTNGGLMIMPGSHKTFLGCAGATPKDNYKKSLQMQDAGTPSDEGLTKMASEYGIKLFTGKAGSATWFDCNCMHGSGDNITPFPRSNVFIVFNSVENTAVEPFAAPIRRPEFIGARDFTPVK.

Positions 1 to 40 (MTTTTTNVTDLYPTRGATEVATPRQDPVVWGSPDAPGPVS) are disordered. Gln133 is a binding site for L-ectoine. 2-oxoglutarate is bound at residue Lys139. Positions 150, 152, and 251 each coordinate Fe cation.

The protein belongs to the PhyH family. EctD subfamily. Homodimer. Requires Fe(2+) as cofactor.

It catalyses the reaction L-ectoine + 2-oxoglutarate + O2 = 5-hydroxyectoine + succinate + CO2. In terms of biological role, involved in the biosynthesis of 5-hydroxyectoine, called compatible solute, which helps organisms to survive extreme osmotic stress by acting as a highly soluble organic osmolyte. Catalyzes the 2-oxoglutarate-dependent selective hydroxylation of L-ectoine to yield (4S,5S)-5-hydroxyectoine. The sequence is that of Ectoine dioxygenase from Streptomyces coelicolor (strain ATCC BAA-471 / A3(2) / M145).